Consider the following 386-residue polypeptide: Skeletal aspartic acid-rich protein 1 (386 aa).

The N-terminal stretch at 1 to 24 (MAFVSCFHLRLLFLCLALFMAAEC) is a signal peptide. Disordered stretches follow at residues 33 to 145 (VDSD…PFSL) and 244 to 291 (EVTD…DCPH). Residues 63 to 107 (YDASDDNDNDNDDDDNNDNDNDNDDDNDVDRDNDNDDDDFDDSND) show a composition bias toward acidic residues. 2 stretches are compositionally biased toward basic and acidic residues: residues 133–142 (HSVESFEDRP) and 244–265 (EVTD…KDTP). Positions 266–288 (DTDSDPDDSSDNANDGDDDDDDD) are enriched in acidic residues.

As to expression, component of the acid-insoluble and acid-soluble organic matrix of the aragonitic skeleton (at protein level).

It localises to the secreted. This chain is Skeletal aspartic acid-rich protein 1, found in Acropora millepora (Staghorn coral).